The sequence spans 96 residues: UPF0166 protein aq_448 (96 aa).

This sequence belongs to the UPF0166 family.

In Aquifex aeolicus (strain VF5), this protein is UPF0166 protein aq_448.